The following is a 796-amino-acid chain: Protein SEY1 homolog (796 aa).

The Cytoplasmic portion of the chain corresponds to 1–701 (MESSNDFSNK…AGTSISSWRN (701 aa)). In terms of domain architecture, GB1/RHD3-type G spans 46–280 (GFRFNVVTIL…VPSDGFFVYS (235 aa)). 56-63 (GSQSSGKS) lines the GTP pocket. A coiled-coil region spans residues 554–626 (SLVLLLKAAR…DALTLLKVLK (73 aa)). The helical transmembrane segment at 702 to 722 (IPPIFWLVLLVLGWNELRSVF) threads the bilayer. At 723–725 (KVL) the chain is on the lumenal side. The chain crosses the membrane as a helical span at residues 726 to 746 (LRFYVVIPLLIVFYFTFSYSA). At 747-796 (TKLLGPKADQYVKPVRDKVLSLFTALLAWFVRTLHMIASKSSSFKQRPAT) the chain is on the cytoplasmic side.

This sequence belongs to the TRAFAC class dynamin-like GTPase superfamily. GB1/RHD3 GTPase family. RHD3 subfamily.

It is found in the endoplasmic reticulum membrane. Functionally, probable GTP-binding protein that may be involved in cell development. The sequence is that of Protein SEY1 homolog from Theileria parva (East coast fever infection agent).